The following is a 380-amino-acid chain: MAPNIRKSHPLLKMVNNSLIDLPTPSNISTWWNFGSLLGICLTMQILTGLLLATHYTADTTLAFSSVAHTCRDVQYGWLIRNLHANGASFFFICIYLHIGRGFYYGSYLYKETWNTGVILLLTLMATAFVGYVLPWGQMSFWGATVITNLFSAIPYIGQTLVEWAWGGFSVDNPTLTRFFALHFLLPFAIAGLTLIHLTFLHESGSNNPLGIVSNCDKIPFHPYFSLKDILGLTLLLLPLTTLALFSPNLLGDPENFTPANPLVTPPHIKPEWYFLFAYAILRSIPNKLGGVLALAASVLILFLCPLLHKSKQRTMAFRPLSQLLFWTLTANLLILTWVGSQPVEHPFIIIGQLASLTYFFTLLILFPIAGALENKLLNY.

The next 4 membrane-spanning stretches (helical) occupy residues 34-54 (FGSL…LLAT), 78-99 (WLIR…YLHI), 114-134 (WNTG…GYVL), and 179-199 (FFAL…IHLT). Positions 84 and 98 each coordinate heme b. Residues His-183 and His-197 each contribute to the heme b site. His-202 contacts a ubiquinone. Transmembrane regions (helical) follow at residues 227–247 (LKDI…ALFS), 289–309 (LGGV…PLLH), 321–341 (LSQL…WVGS), and 348–368 (FIII…ILFP).

Belongs to the cytochrome b family. The cytochrome bc1 complex contains 11 subunits: 3 respiratory subunits (MT-CYB, CYC1 and UQCRFS1), 2 core proteins (UQCRC1 and UQCRC2) and 6 low-molecular weight proteins (UQCRH/QCR6, UQCRB/QCR7, UQCRQ/QCR8, UQCR10/QCR9, UQCR11/QCR10 and a cleavage product of UQCRFS1). This cytochrome bc1 complex then forms a dimer. The cofactor is heme b.

It is found in the mitochondrion inner membrane. In terms of biological role, component of the ubiquinol-cytochrome c reductase complex (complex III or cytochrome b-c1 complex) that is part of the mitochondrial respiratory chain. The b-c1 complex mediates electron transfer from ubiquinol to cytochrome c. Contributes to the generation of a proton gradient across the mitochondrial membrane that is then used for ATP synthesis. This Ciconia ciconia (White stork) protein is Cytochrome b (MT-CYB).